A 355-amino-acid polypeptide reads, in one-letter code: Uroporphyrinogen decarboxylase (355 aa).

Substrate is bound by residues 27–31 (RQAGR), aspartate 78, tyrosine 155, threonine 210, and histidine 328.

The protein belongs to the uroporphyrinogen decarboxylase family. As to quaternary structure, homodimer.

It is found in the cytoplasm. It catalyses the reaction uroporphyrinogen III + 4 H(+) = coproporphyrinogen III + 4 CO2. It participates in porphyrin-containing compound metabolism; protoporphyrin-IX biosynthesis; coproporphyrinogen-III from 5-aminolevulinate: step 4/4. Functionally, catalyzes the decarboxylation of four acetate groups of uroporphyrinogen-III to yield coproporphyrinogen-III. The polypeptide is Uroporphyrinogen decarboxylase (Pseudomonas fluorescens (strain SBW25)).